Reading from the N-terminus, the 212-residue chain is Leucine efflux protein (212 aa).

6 consecutive transmembrane segments (helical) span residues 12 to 32, 49 to 69, 71 to 91, 122 to 142, 153 to 173, and 188 to 208; these read TYLV…LFVL, GVFI…ATLI, TTPI…LYLG, ILSL…VQFI, FFIL…FLII, and LAKV…ARLA.

The protein belongs to the Rht family.

It localises to the cell inner membrane. It catalyses the reaction L-leucine(in) + H(+)(out) = L-leucine(out) + H(+)(in). Functionally, exporter of leucine. In Escherichia coli O6:K15:H31 (strain 536 / UPEC), this protein is Leucine efflux protein (leuE).